Consider the following 393-residue polypeptide: Lipoyl synthase, mitochondrial (393 aa).

[4Fe-4S] cluster is bound by residues Cys-115, Cys-120, Cys-126, Cys-146, Cys-150, Cys-153, and Ser-362. In terms of domain architecture, Radical SAM core spans 131 to 351 (ETGTATATIM…RILGMDMGFR (221 aa)).

It belongs to the radical SAM superfamily. Lipoyl synthase family. [4Fe-4S] cluster serves as cofactor.

Its subcellular location is the mitochondrion. It carries out the reaction [[Fe-S] cluster scaffold protein carrying a second [4Fe-4S](2+) cluster] + N(6)-octanoyl-L-lysyl-[protein] + 2 oxidized [2Fe-2S]-[ferredoxin] + 2 S-adenosyl-L-methionine + 4 H(+) = [[Fe-S] cluster scaffold protein] + N(6)-[(R)-dihydrolipoyl]-L-lysyl-[protein] + 4 Fe(3+) + 2 hydrogen sulfide + 2 5'-deoxyadenosine + 2 L-methionine + 2 reduced [2Fe-2S]-[ferredoxin]. It functions in the pathway protein modification; protein lipoylation via endogenous pathway; protein N(6)-(lipoyl)lysine from octanoyl-[acyl-carrier-protein]: step 2/2. Its function is as follows. Catalyzes the radical-mediated insertion of two sulfur atoms into the C-6 and C-8 positions of the octanoyl moiety bound to the lipoyl domains of lipoate-dependent enzymes, thereby converting the octanoylated domains into lipoylated derivatives. The chain is Lipoyl synthase, mitochondrial from Vitis vinifera (Grape).